Consider the following 306-residue polypeptide: Palmitoyl-protein thioesterase ABHD10, mitochondrial (306 aa).

The transit peptide at 1–52 directs the protein to the mitochondrion; that stretch reads MAVARLAAVAAWVPCRSWGWAAVPFGPHRGLSVLLARIPQRAPRWLPACRQK. An AB hydrolase-1 domain is found at 78–178; the sequence is IIFIPGYLSY…VVALIGVATA (101 aa). Catalysis depends on charge relay system residues Ser-152, Asp-249, and His-279.

The protein belongs to the AB hydrolase superfamily.

It localises to the mitochondrion. The catalysed reaction is S-hexadecanoyl-L-cysteinyl-[protein] + H2O = L-cysteinyl-[protein] + hexadecanoate + H(+). It catalyses the reaction mycophenolic acid O-acyl-beta-D-glucuronide + H2O = mycophenolate + D-glucuronate + H(+). Its activity is regulated as follows. Inhibited by palmostatin-B. Its function is as follows. Acts as an acyl-protein thioesterase that hydrolyzes fatty acids from acylated residues in proteins. Regulates the mitochondrial S-depalmitoylation of the nucleophilic active site residue of peroxiredoxin-5/PRDX5, a key antioxidant protein, therefore modulating mitochondrial antioxidant ability. Also catalyzes the deglucuronidation of mycophenolic acid acyl-glucuronide, an active metabolite of the immunosuppressant drug mycophenolate. This is Palmitoyl-protein thioesterase ABHD10, mitochondrial from Homo sapiens (Human).